Consider the following 565-residue polypeptide: Protein nucleotidyltransferase YdiU (565 aa).

Residues Gly118, Gly120, Arg121, Lys141, Asp153, Gly154, Arg211, and Arg218 each coordinate ATP. The Proton acceptor role is filled by Asp290. Mg(2+) is bound by residues Asn291 and Asp300. Residue Asp300 coordinates ATP.

The protein belongs to the SELO family. The cofactor is Mg(2+). Mn(2+) is required as a cofactor.

It carries out the reaction L-seryl-[protein] + ATP = 3-O-(5'-adenylyl)-L-seryl-[protein] + diphosphate. It catalyses the reaction L-threonyl-[protein] + ATP = 3-O-(5'-adenylyl)-L-threonyl-[protein] + diphosphate. The catalysed reaction is L-tyrosyl-[protein] + ATP = O-(5'-adenylyl)-L-tyrosyl-[protein] + diphosphate. The enzyme catalyses L-histidyl-[protein] + UTP = N(tele)-(5'-uridylyl)-L-histidyl-[protein] + diphosphate. It carries out the reaction L-seryl-[protein] + UTP = O-(5'-uridylyl)-L-seryl-[protein] + diphosphate. It catalyses the reaction L-tyrosyl-[protein] + UTP = O-(5'-uridylyl)-L-tyrosyl-[protein] + diphosphate. In terms of biological role, nucleotidyltransferase involved in the post-translational modification of proteins. It can catalyze the addition of adenosine monophosphate (AMP) or uridine monophosphate (UMP) to a protein, resulting in modifications known as AMPylation and UMPylation. The polypeptide is Protein nucleotidyltransferase YdiU (Nitrosospira multiformis (strain ATCC 25196 / NCIMB 11849 / C 71)).